We begin with the raw amino-acid sequence, 151 residues long: HTH-type transcriptional regulator TcaR (151 aa).

The HTH marR-type domain maps to 1-142 (MVKHLQDHIQ…VRQVLEVINH (142 aa)). The segment at residues 54–77 (ISEITQRQGVNKAAVSRRIKKLID) is a DNA-binding region (H-T-H motif).

Involved in the antibiotic teicoplanin susceptibility. Inactivation of the tcaRAB operon leads to teicoplanin resistance. In terms of biological role, is a weak negative regulator of transcription of the icaABD operon. This chain is HTH-type transcriptional regulator TcaR (tcaR), found in Staphylococcus aureus (strain COL).